We begin with the raw amino-acid sequence, 458 residues long: MLKTIFSLIAIIPMTLSFKKQFFWTAFISSSFLMPFLFFIFTPLSFNSSFLMHLQNKLFGYDMISAPLVFLSLWMLPLMALASQHHMKKSPLSYQLLYITILIIMQTLLILTFLSTNLMNFYILFESSLIPILLIIFRWGNQKERINAGIYLSFYTLIGSLPLLASLLFLSNTLSTLYIPILMMESSEMYHSPILWLGCFSALLIKTPLYGFHLWLPKAHVEATIAGSMTLAALMLKLGGYGMIRLSLMPFLHSPKLSLILISIALWGAVMTSFICLRQTDLKALIAYSSVSHMGLMTASIMTLSLWGMSGAFIMMIAHGLSSSALFFLANSNYEKTNTRTIILLRHTQMLLPLTSLWWLFIILTNLAMPPSINFISEITIMSSLFLWSPLTFPFLALTMVITTTYSMSMFMLAQGKLSKMTKILSPFSTREHLTLFLHLFPMIAIMAYPNMIINIFC.

Transmembrane regions (helical) follow at residues 22-42, 63-83, 96-116, 117-137, 150-170, 194-214, 224-244, 257-277, 284-306, 311-333, 350-370, 391-413, and 434-454; these read FFWT…FIFT, MISA…ALAS, LLYI…FLST, NLMN…LIIF, IYLS…LLFL, ILWL…GFHL, TIAG…YGMI, LSLI…FICL, ALIA…TLSL, GAFI…ANSN, MLLP…LAMP, LTFP…MFML, and LTLF…NMII.

The protein belongs to the complex I subunit 4 family.

The protein resides in the mitochondrion membrane. It carries out the reaction a ubiquinone + NADH + 5 H(+)(in) = a ubiquinol + NAD(+) + 4 H(+)(out). Its function is as follows. Core subunit of the mitochondrial membrane respiratory chain NADH dehydrogenase (Complex I) that is believed to belong to the minimal assembly required for catalysis. Complex I functions in the transfer of electrons from NADH to the respiratory chain. The immediate electron acceptor for the enzyme is believed to be ubiquinone. The sequence is that of NADH-ubiquinone oxidoreductase chain 4 (MT-ND4) from Myxine glutinosa (Atlantic hagfish).